We begin with the raw amino-acid sequence, 872 residues long: MLTAKETRDSFKNFFESKGHQIVPSAPMVIKDDPTLMFTNAGMNQFKDIILGNHPAKYHRVADSQKCLRVSGKHNDLEEVGHDTYHHTMFEMLGNWSFGDYFKKEAISWAWEYLVDVLKLNPEHLYATVFEGSPEEGLERDNEAASYWEQYLPKDHIINGNKHDNFWEMGDTGPCGPCSEIHIDLRPAEERAKISGRDLVNHDHPQVIEIWNLVFMQYNRKADSTLEPLPAKVIDTGMGFERLCMALQGKTSNYDTDVFQPLIKAIAQMAGTEYGKNEQNDIAMRVIADHIRTIAFSITDGQLPSNAKAGYVIRRILRRAVRYGYTFLGQKQAFMYKLLPVLIDSMGDAYPELIAQKELIEKVIKEEEESFLRTLETGIRLLDKTMADTKANGKTEISGKDAFTLYDTFGFPLDLTELILRENGMTVNVEEFDAEMQQQKQRARNAAAIETGDWIILKEGTTEFVGYDYTEYETSILRYRQVKQKNQTLYQIVLDYTPFYAESGGQVGDTGVLVNEFETIEVIDTKKENNLPIHITKKLPEHPEAPMMACVDTDKRAACAANHSATHLLDEALREVLGEHVEQKGSLVTPDSLRFDFSHFQKVTDEELRKVEHLVNAKIRANVPLQEHRNIPIEEAKELGAIALFGEKYGDHVRVIQFGSSIEFCGGTHVAATGNIGMVKIISESSVAAGVRRIEAYTGARVEEMLDTIQDTLSDLKALFNNAPDLGVAIRKYIDENAGLKKQVEDFMKEKEAAVKERLLKNVQEINGIKVIKFCLPMPAEVVKNIAFQLRGEITENLFFVAGTVDANKPMLTVMISDNLVAGGLKAGNLVKEAAKLIQGGGGGQPHFATAGGKNPDGLNAAVEKVLELAGI.

Histidine 563, histidine 567, cysteine 665, and histidine 669 together coordinate Zn(2+).

The protein belongs to the class-II aminoacyl-tRNA synthetase family. Zn(2+) is required as a cofactor.

It localises to the cytoplasm. It carries out the reaction tRNA(Ala) + L-alanine + ATP = L-alanyl-tRNA(Ala) + AMP + diphosphate. Functionally, catalyzes the attachment of alanine to tRNA(Ala) in a two-step reaction: alanine is first activated by ATP to form Ala-AMP and then transferred to the acceptor end of tRNA(Ala). Also edits incorrectly charged Ser-tRNA(Ala) and Gly-tRNA(Ala) via its editing domain. The polypeptide is Alanine--tRNA ligase (Bacteroides fragilis (strain YCH46)).